The primary structure comprises 89 residues: Small ribosomal subunit protein uS15 (89 aa).

The protein belongs to the universal ribosomal protein uS15 family. Part of the 30S ribosomal subunit. Forms a bridge to the 50S subunit in the 70S ribosome, contacting the 23S rRNA.

Its function is as follows. One of the primary rRNA binding proteins, it binds directly to 16S rRNA where it helps nucleate assembly of the platform of the 30S subunit by binding and bridging several RNA helices of the 16S rRNA. In terms of biological role, forms an intersubunit bridge (bridge B4) with the 23S rRNA of the 50S subunit in the ribosome. The chain is Small ribosomal subunit protein uS15 from Syntrophobacter fumaroxidans (strain DSM 10017 / MPOB).